The chain runs to 587 residues: Transport inhibitor response 1-like protein Os05g0150500 (587 aa).

The F-box domain maps to S6–N63. K85 provides a ligand contact to 1D-myo-inositol hexakisphosphate. An interaction with auxin-responsive proteins region spans residues D92–F93. Residues K124–R125 and R355 contribute to the 1D-myo-inositol hexakisphosphate site. The segment at P358–G363 is interaction with auxin-responsive proteins. C409–R411 is a binding site for 1D-myo-inositol hexakisphosphate. Residues C413–P417 form an interaction with auxin-responsive proteins region. R444 lines the 1D-myo-inositol hexakisphosphate pocket. Residues A472–F473 are interaction with auxin-responsive proteins. Residues K492–K493 and R517 each bind 1D-myo-inositol hexakisphosphate.

Part of a SCF (SKP1-cullin-F-box) protein ligase complex. May interact with auxin and auxin-responsive proteins.

It localises to the nucleus. It participates in protein modification; protein ubiquitination. The polypeptide is Transport inhibitor response 1-like protein Os05g0150500 (Oryza sativa subsp. japonica (Rice)).